We begin with the raw amino-acid sequence, 321 residues long: MIIFTLRRLLLLLVTLFFLTFIGFSLSYFTPHAPLQGASLWNAWVFWFNGLLHWDFGVSSINGQLISEQLKEVFPATMELCILAFGFALMVGIPVGMLAGVTRSKWPDRFISALALLGFSIPVFWLALLLTLFFSLTLGWLPVSGRFDLLYEVKPVTGFAIIDAWISDSPWRDEMVMSAIRHMVLPVLTLSVAPTTEVIRLMRISTIEVYDQNYVKAAATRGLSRFTILRRHVLHNALPPVIPRLGLQFSTMLTLAMITEMVFSWPGLGRWLIHAIRQQDYAAISAGVMVIGSLVIVVNVISDILGAMANPLKHKEWYALR.

At 1-8 the chain is on the cytoplasmic side; it reads MIIFTLRR. A helical membrane pass occupies residues 9–29; the sequence is LLLLLVTLFFLTFIGFSLSYF. Over 30–80 the chain is Periplasmic; it reads TPHAPLQGASLWNAWVFWFNGLLHWDFGVSSINGQLISEQLKEVFPATMEL. One can recognise an ABC transmembrane type-1 domain in the interval 74–302; that stretch reads FPATMELCIL…SLVIVVNVIS (229 aa). Residues 81 to 101 traverse the membrane as a helical segment; sequence CILAFGFALMVGIPVGMLAGV. At 102–113 the chain is on the cytoplasmic side; it reads TRSKWPDRFISA. Residues 114 to 134 form a helical membrane-spanning segment; it reads LALLGFSIPVFWLALLLTLFF. Residues 135–174 are Periplasmic-facing; the sequence is SLTLGWLPVSGRFDLLYEVKPVTGFAIIDAWISDSPWRDE. The chain crosses the membrane as a helical span at residues 175-195; it reads MVMSAIRHMVLPVLTLSVAPT. Residues 196 to 248 lie on the Cytoplasmic side of the membrane; sequence TEVIRLMRISTIEVYDQNYVKAAATRGLSRFTILRRHVLHNALPPVIPRLGLQ. The chain crosses the membrane as a helical span at residues 249–269; sequence FSTMLTLAMITEMVFSWPGLG. Over 270–280 the chain is Periplasmic; it reads RWLIHAIRQQD. The helical transmembrane segment at 281–301 threads the bilayer; sequence YAAISAGVMVIGSLVIVVNVI. The Cytoplasmic segment spans residues 302–321; sequence SDILGAMANPLKHKEWYALR.

This sequence belongs to the binding-protein-dependent transport system permease family. OppBC subfamily.

It localises to the cell inner membrane. Its function is as follows. Involved in a peptide intake transport system that plays a role in the resistance to antimicrobial peptides. The sequence is that of Peptide transport system permease protein SapB from Salmonella typhimurium (strain LT2 / SGSC1412 / ATCC 700720).